The following is a 1010-amino-acid chain: Collagen, type I, alpha 1b (1010 aa).

Residues 1–24 (SSGPPQPGPMGPMGPRGPPGPPGS) are compositionally biased toward pro residues. The disordered stretch occupies residues 1 to 969 (SSGPPQPGPM…PDGTQKSPAR (969 aa)). Positions 25 to 48 (SGPQGFTGPPGEPGEPGASGAMGS) are enriched in low complexity. The span at 58–72 (NGDDGEPGKPGRPGE) shows a compositional bias: basic and acidic residues. The span at 73-82 (RGAAGPQGAR) shows a compositional bias: low complexity. Over residues 145 to 159 (GGPPGPTGPAGPPGF) the composition is skewed to pro residues. 2 stretches are compositionally biased toward gly residues: residues 160–179 (PGGA…GNEG) and 203–212 (GTDGGPGAKG). Composition is skewed to low complexity over residues 213-268 (SPGA…PGPA) and 300-310 (ERGAPGARGFP). Over residues 311–323 (GADGGAGGKGAPG) the composition is skewed to gly residues. 2 stretches are compositionally biased toward low complexity: residues 324 to 343 (ERGA…PGSK) and 405 to 448 (PAGA…APGE). Gly residues-rich tracts occupy residues 468–477 (GAPGLGGPTG), 486–495 (GAPGGLGAPG), and 519–528 (GGKGGDGAPG). Low complexity-rich tracts occupy residues 559-568 (VAGPTGPRGA) and 581-596 (AGFA…PGAK). Gly residues-rich tracts occupy residues 609 to 618 (GAPGPGGPVG) and 633 to 642 (GARGGAGPPG). Composition is skewed to low complexity over residues 643–662 (ATGF…AGAA), 679–701 (ETGA…SGEK), and 796–805 (APGAVGPSGK). Residues 834-847 (KGDRGEAGEAGDRG) are compositionally biased toward basic and acidic residues. Residues 872–900 (PAGASGPAGPRGPAGSNGAAGKDGMNGLP) are compositionally biased toward low complexity. Positions 918 to 933 (AGPPGPPGPAGPPGPP) are enriched in pro residues. Residues 982 to 1010 (RLPLLDLAPMDVGAPDQEFGVEVGPVCFL) enclose the Fibrillar collagen NC1 domain.

The protein belongs to the fibrillar collagen family.

Its subcellular location is the secreted. It is found in the extracellular space. It localises to the extracellular matrix. The chain is Collagen, type I, alpha 1b from Epinephelus marginatus (Dusky grouper).